The sequence spans 33 residues: Photosystem II reaction center protein Psb30 (33 aa).

The helical transmembrane segment at 5–25 (LIVQLTSLALITLAGPLIVAL) threads the bilayer.

Belongs to the Psb30/Ycf12 family. In terms of assembly, PSII is composed of 1 copy each of membrane proteins PsbA, PsbB, PsbC, PsbD, PsbE, PsbF, PsbH, PsbI, PsbJ, PsbK, PsbL, PsbM, PsbT, PsbY, PsbZ, Psb30/Ycf12, peripheral proteins of the oxygen-evolving complex and a large number of cofactors. It forms dimeric complexes.

Its subcellular location is the plastid. It localises to the chloroplast thylakoid membrane. Functionally, a core subunit of photosystem II (PSII), probably helps stabilize the reaction center. This chain is Photosystem II reaction center protein Psb30, found in Euglena sanguinea.